A 116-amino-acid polypeptide reads, in one-letter code: MNTVRVTFLLVFVLAVSLGQADKDENRMEMQEKTEQGKSYLDFAENLLLQKLEELEAKLLEEDSEESRNSRQKRCIGEGVPCDENDPRCCSGLVCLKPTLHGIWYKSYYCYKKRSA.

The first 21 residues, 1–21, serve as a signal peptide directing secretion; sequence MNTVRVTFLLVFVLAVSLGQA. Positions 22–74 are excised as a propeptide; that stretch reads DKDENRMEMQEKTEQGKSYLDFAENLLLQKLEELEAKLLEEDSEESRNSRQKR. The segment covering 60-69 has biased composition (basic and acidic residues); the sequence is LEEDSEESRN. Residues 60–83 form a disordered region; sequence LEEDSEESRNSRQKRCIGEGVPCD. Cystine bridges form between Cys75/Cys90, Cys82/Cys95, and Cys89/Cys110.

It belongs to the neurotoxin 14 (magi-1) family. 01 (HNTX-16) subfamily. Expressed by the venom gland.

The protein resides in the secreted. In terms of biological role, probable ion channel inhibitor. In Cyriopagopus hainanus (Chinese bird spider), this protein is U11-theraphotoxin-Hhn1b.